Consider the following 554-residue polypeptide: MALSIMSSYASFRPFKPSSSLSSSQNIIRNFDENSKYHIRSNGDLTPQKDLDKYRDVLRKADPFDEGLKMIDAIQRLGIDYIFEEEIDKIIQSQSAYKFFREFEHDHHHHQDLYDVALRFRLLRQHGLFVPADIFNKYKDNNKGCFDTRLREDIKGLLSLYEASHLCIEGENILDEAALFSAQHLEASMTRLHRYDQYQAKFVATTLQNPTHKSLSKFTAKDLFGVYPSENGYINLFQQLAKVEFNRVQSLHRMEIDKVTRWWRDIGLAKELTFARDQPVKWYIWSMACLTDPILSKQRVALTKSISFIYVIDDIFDMYSSLDELILFTQAVSSWEYSAIQKLPDSMKTCFRALDNMINESSHTIYQKRGWSPLHSLRKTWASLCEAFLVEAKWFASRHVPKAKEYLENGVVSSGVHVVLVHIFVLLDETSLTQKTLDFVENMPSIITSTASILRLWDDFGSAKDENQEGHDGSYVECYMKELGGSVEDAREEMMEKISDAWKCLNKECILRNPAFPPPFLKASLNLARLVPLMYNYDHNQRLPHLEEHIKSLL.

Positions 276, 313, 317, 455, and 458 each coordinate (2E,6E)-farnesyl diphosphate. Mg(2+) contacts are provided by D313 and D317. The short motif at 313–317 (DDIFD) is the DDXXD motif element. Mg(2+)-binding residues include D458, S462, and E466.

This sequence belongs to the terpene synthase family. Tpsb subfamily. Mg(2+) is required as a cofactor. Mn(2+) serves as cofactor. In terms of tissue distribution, highly expressed in glandular trichomes.

It carries out the reaction (2E,6E)-farnesyl diphosphate + H2O = (6E)-nerolidol + diphosphate. The catalysed reaction is (2E)-geranyl diphosphate + H2O = (S)-linalool + diphosphate. The protein operates within secondary metabolite biosynthesis; terpenoid biosynthesis. In terms of biological role, involved in sesquiterpene olefins biosynthesis, constituants of cannabinoids and terpenoids-rich resins. Catalyzes primarily the conversion of (2E)-farnesyl diphosphate to (E)-nerolidol, and the conversion of (2E)-geranyl diphosphate to (+)linalool. This is (E)-nerolidol synthase TPS18VF from Cannabis sativa (Hemp).